Reading from the N-terminus, the 122-residue chain is Large ribosomal subunit protein uL29A (122 aa).

The stretch at 10–69 forms a coiled coil; it reads QLGIKQIEERAAEIKADLAALRQKKNSGDVGANDIKTAKKNLARALTVRREKILEELVEA.

The protein belongs to the universal ribosomal protein uL29 family. Component of the large ribosomal subunit.

The protein localises to the cytoplasm. This chain is Large ribosomal subunit protein uL29A (RPL35A), found in Encephalitozoon cuniculi (strain GB-M1) (Microsporidian parasite).